Reading from the N-terminus, the 510-residue chain is NAD(P)H-quinone oxidoreductase subunit 2, chloroplastic (510 aa).

Helical transmembrane passes span 24–44, 59–79, 99–119, 124–144, 149–169, 184–204, 229–249, 295–315, 323–343, 354–374, 395–415, and 418–438; these read LLLF…GLIL, WFYF…FFRW, IFQF…VEYI, MAIT…MFLC, LITI…LSGY, LLMG…LYGL, ISIA…PAPF, WHLL…LIAL, MLAY…IVGD, YMLF…SFGL, ALSS…AGFF, and LYLF…IGLL.

This sequence belongs to the complex I subunit 2 family. As to quaternary structure, NDH is composed of at least 16 different subunits, 5 of which are encoded in the nucleus.

Its subcellular location is the plastid. The protein localises to the chloroplast thylakoid membrane. It catalyses the reaction a plastoquinone + NADH + (n+1) H(+)(in) = a plastoquinol + NAD(+) + n H(+)(out). The enzyme catalyses a plastoquinone + NADPH + (n+1) H(+)(in) = a plastoquinol + NADP(+) + n H(+)(out). NDH shuttles electrons from NAD(P)H:plastoquinone, via FMN and iron-sulfur (Fe-S) centers, to quinones in the photosynthetic chain and possibly in a chloroplast respiratory chain. The immediate electron acceptor for the enzyme in this species is believed to be plastoquinone. Couples the redox reaction to proton translocation, and thus conserves the redox energy in a proton gradient. This is NAD(P)H-quinone oxidoreductase subunit 2, chloroplastic from Coelogyne cristata (Orchid).